The primary structure comprises 476 residues: Trigger factor (476 aa).

The PPIase FKBP-type domain occupies 169–254 (GDKVTLDYVG…VKEVAAAEEL (86 aa)). The interval 437–476 (SRDELLAEDEAEGEEKKAAGETKKKAAPKKKAAKKESAAE) is disordered. Residues 450 to 460 (EEKKAAGETKK) show a composition bias toward basic and acidic residues.

This sequence belongs to the FKBP-type PPIase family. Tig subfamily.

It is found in the cytoplasm. The catalysed reaction is [protein]-peptidylproline (omega=180) = [protein]-peptidylproline (omega=0). Involved in protein export. Acts as a chaperone by maintaining the newly synthesized protein in an open conformation. Functions as a peptidyl-prolyl cis-trans isomerase. This chain is Trigger factor, found in Chelativorans sp. (strain BNC1).